Here is a 220-residue protein sequence, read N- to C-terminus: uncharacterized protein (220 aa).

A helical membrane pass occupies residues phenylalanine 20–isoleucine 42.

It localises to the membrane. This is an uncharacterized protein from Rickettsia prowazekii (strain Madrid E).